A 346-amino-acid chain; its full sequence is tRNA (guanine-N(7)-)-methyltransferase (346 aa).

Residues glycine 101 and 124 to 125 contribute to the S-adenosyl-L-methionine site; that span reads EI. A disordered region spans residues 149–191; sequence LKSAGGGGSDAAPESPAAPPTPSEAASPDSTTPSEQQAPTTLV. A compositionally biased stretch (low complexity) spans 171–182; it reads SEAASPDSTTPS. S-adenosyl-L-methionine is bound by residues 204–205 and cysteine 224; that span reads NT. The active site involves aspartate 227. S-adenosyl-L-methionine is bound at residue 318-320; that stretch reads TEE.

It belongs to the class I-like SAM-binding methyltransferase superfamily. TrmB family. Forms a complex with trm82.

The protein resides in the nucleus. The enzyme catalyses guanosine(46) in tRNA + S-adenosyl-L-methionine = N(7)-methylguanosine(46) in tRNA + S-adenosyl-L-homocysteine. It functions in the pathway tRNA modification; N(7)-methylguanine-tRNA biosynthesis. In terms of biological role, catalyzes the formation of N(7)-methylguanine at position 46 (m7G46) in tRNA. This chain is tRNA (guanine-N(7)-)-methyltransferase (trm8), found in Aspergillus terreus (strain NIH 2624 / FGSC A1156).